The chain runs to 323 residues: tRNA U34 carboxymethyltransferase (323 aa).

Residues Lys-91, Trp-105, Lys-110, Gly-130, 152 to 154 (DPT), 181 to 182 (IE), Met-196, Tyr-200, and Arg-315 each bind carboxy-S-adenosyl-L-methionine.

This sequence belongs to the class I-like SAM-binding methyltransferase superfamily. CmoB family. In terms of assembly, homotetramer.

The enzyme catalyses carboxy-S-adenosyl-L-methionine + 5-hydroxyuridine(34) in tRNA = 5-carboxymethoxyuridine(34) in tRNA + S-adenosyl-L-homocysteine + H(+). Functionally, catalyzes carboxymethyl transfer from carboxy-S-adenosyl-L-methionine (Cx-SAM) to 5-hydroxyuridine (ho5U) to form 5-carboxymethoxyuridine (cmo5U) at position 34 in tRNAs. The polypeptide is tRNA U34 carboxymethyltransferase (Salmonella paratyphi B (strain ATCC BAA-1250 / SPB7)).